Reading from the N-terminus, the 681-residue chain is Calpain-C (681 aa).

Positions 18–331 (LWEDPDFPAV…FSTMEVVYLD (314 aa)) constitute a Calpain catalytic domain. The domain III stretch occupies residues 332-481 (TETSNDEEML…ILGTGSFRLS (150 aa)). The interval 482–514 (CLETQTMILLDPFPALKSTDAERCGGPKVKSVC) is linker. Residues 515 to 681 (QYEPVYMQLA…HDWIKSILSC (167 aa)) form a domain IV region. Residues 552–587 (ANIDICRQVIALQDRSGSGRITFQQFKTFMVNLKSW) form the EF-hand domain. Ca(2+) contacts are provided by Asp565, Ser567, Ser569, and Arg571.

This sequence belongs to the peptidase C2 family. As to expression, localized to the salivary glands in the larva.

Its subcellular location is the cytoplasm. Not known; does not seem to have protease activity. The chain is Calpain-C from Drosophila melanogaster (Fruit fly).